Consider the following 483-residue polypeptide: MEIINVFLFLIILFLVKDFVKKNKKIHTKSPSGPIAFPILGNVVQIRFWELFKIQEHELFGGYSKKYNGVVRAWFGERLFFFVSNYDVVKYFQKDENFHNRPSVLVPGWRYASSNGLGVMSSSDDKWKRAKSSVSQSLRVRTTKKLMEEKAIEFIDSLEKISNNNEIFYPKGHIQGYACSMLFKYMFNQDLSVESGMSRTIGNAVEHVFGNLSKLTAFDCFEIFSPLYDWFFTRRLKGCDIVRQIISSQNENHLKSIDPSKPRDLMDDLLIEYGLNEITKEDTMQINQICFDIFGPAVGTVTITMNWVILQLCNRPELQEIAYQEIKKAVKDDEYVNLNHKQNAPYIVAFIKETMRLCSNGFGLPRTAKNDQICGDFFIPKDAIIFINYLEISQNEEIFKNAKEFNPTRYLDESLPVPNIHFGVGQRACPGRFVAIDKMFLGISNLLLKYKLKTQNGEKIDDSIQFSVSLKAKDYGIKLEKRI.

Residues 1-21 (MEIINVFLFLIILFLVKDFVK) form a helical membrane-spanning segment. Heme is bound at residue Cys-429.

It belongs to the cytochrome P450 family. Heme is required as a cofactor.

It localises to the membrane. The polypeptide is Probable cytochrome P450 517A1 (cyp517A1) (Dictyostelium discoideum (Social amoeba)).